A 262-amino-acid polypeptide reads, in one-letter code: Thiazole synthase (262 aa).

Catalysis depends on Lys96, which acts as the Schiff-base intermediate with DXP. 1-deoxy-D-xylulose 5-phosphate is bound by residues Gly157, 184–185 (AG), and 206–207 (NT).

Belongs to the ThiG family. As to quaternary structure, homotetramer. Forms heterodimers with either ThiH or ThiS.

It is found in the cytoplasm. It catalyses the reaction [ThiS sulfur-carrier protein]-C-terminal-Gly-aminoethanethioate + 2-iminoacetate + 1-deoxy-D-xylulose 5-phosphate = [ThiS sulfur-carrier protein]-C-terminal Gly-Gly + 2-[(2R,5Z)-2-carboxy-4-methylthiazol-5(2H)-ylidene]ethyl phosphate + 2 H2O + H(+). It functions in the pathway cofactor biosynthesis; thiamine diphosphate biosynthesis. Catalyzes the rearrangement of 1-deoxy-D-xylulose 5-phosphate (DXP) to produce the thiazole phosphate moiety of thiamine. Sulfur is provided by the thiocarboxylate moiety of the carrier protein ThiS. In vitro, sulfur can be provided by H(2)S. The chain is Thiazole synthase from Legionella pneumophila (strain Lens).